The sequence spans 302 residues: Probable lipid kinase YegS-like (302 aa).

A DAGKc domain is found at 1-129 (MDKDKVLLVL…IDLGAVNGKL (129 aa)). ATP is bound by residues Thr-39, 65-71 (GDGTLRE), and Thr-92. Positions 210, 213, and 215 each coordinate Mg(2+). The active-site Proton acceptor is Glu-268.

Belongs to the diacylglycerol/lipid kinase family. YegS lipid kinase subfamily. Mg(2+) serves as cofactor. It depends on Ca(2+) as a cofactor.

The protein resides in the cytoplasm. Its function is as follows. Probably phosphorylates lipids; the in vivo substrate is unknown. The sequence is that of Probable lipid kinase YegS-like from Pseudomonas aeruginosa (strain UCBPP-PA14).